Consider the following 417-residue polypeptide: D-amino acid dehydrogenase (417 aa).

Residue 3 to 17 coordinates FAD; it reads VIVLGSGVIGVTAAW.

Belongs to the DadA oxidoreductase family. FAD is required as a cofactor.

It catalyses the reaction a D-alpha-amino acid + A + H2O = a 2-oxocarboxylate + AH2 + NH4(+). It functions in the pathway amino-acid degradation; D-alanine degradation; NH(3) and pyruvate from D-alanine: step 1/1. Oxidative deamination of D-amino acids. The protein is D-amino acid dehydrogenase of Methylobacillus flagellatus (strain ATCC 51484 / DSM 6875 / VKM B-1610 / KT).